Consider the following 206-residue polypeptide: Small ribosomal subunit protein uS4 (206 aa).

Residues 96–158 (GRLDNVVYRM…AKQQTRIKAA (63 aa)) enclose the S4 RNA-binding domain.

The protein belongs to the universal ribosomal protein uS4 family. In terms of assembly, part of the 30S ribosomal subunit. Contacts protein S5. The interaction surface between S4 and S5 is involved in control of translational fidelity.

Functionally, one of the primary rRNA binding proteins, it binds directly to 16S rRNA where it nucleates assembly of the body of the 30S subunit. Its function is as follows. With S5 and S12 plays an important role in translational accuracy. The chain is Small ribosomal subunit protein uS4 from Vibrio vulnificus (strain CMCP6).